Consider the following 186-residue polypeptide: Large ribosomal subunit protein uL6 (186 aa).

Belongs to the universal ribosomal protein uL6 family. As to quaternary structure, part of the 50S ribosomal subunit.

Its function is as follows. This protein binds to the 23S rRNA, and is important in its secondary structure. It is located near the subunit interface in the base of the L7/L12 stalk, and near the tRNA binding site of the peptidyltransferase center. The chain is Large ribosomal subunit protein uL6 from Sulfurisphaera tokodaii (strain DSM 16993 / JCM 10545 / NBRC 100140 / 7) (Sulfolobus tokodaii).